Reading from the N-terminus, the 136-residue chain is Large ribosomal subunit protein uL16 (136 aa).

The protein belongs to the universal ribosomal protein uL16 family. In terms of assembly, part of the 50S ribosomal subunit.

Functionally, binds 23S rRNA and is also seen to make contacts with the A and possibly P site tRNAs. The sequence is that of Large ribosomal subunit protein uL16 from Ruthia magnifica subsp. Calyptogena magnifica.